We begin with the raw amino-acid sequence, 1053 residues long: Prestalk protein (1053 aa).

The signal sequence occupies residues 1–18 (MNKIYLILILFTFVGIIL). One copy of the X-1 repeat lies at 38–60 (NKCTLDKCNNGCCSNTPININDN). The 41 X 24 AA tandem repeats, Cys-rich stretch occupies residues 38–1019 (NKCTLDKCNN…VHTPVDCNDN (982 aa)). Residues 61–84 (DECTVDTCNPKTGISHTPVNCDDG) form an X-2 repeat. Residues 85–108 (NSCTADSCLCGKGCQHVPIACDDN) form an X-3 repeat. One copy of the A-1 repeat lies at 109 to 132 (NACTVDSCSNSTGCCHTPLSCDDN). One copy of the A-2 repeat lies at 133-156 (NPCTVDSCSNSTGCCHTPINVDDH). The stretch at 157–180 (NACTEDKCTQSGGVTHTPIACDDK) is one B-1 repeat. Residues 181-204 (NACTVDSCSNSTGCCHTPLSCDDN) form an A-3 repeat. One copy of the A-4 repeat lies at 205-228 (NACTVDSCSNSTGCVHTPINVDDH). One copy of the B-2 repeat lies at 229–252 (NACTEDKCTQSGGVTHTPIACDDK). An A-5 repeat occupies 253 to 276 (NACTADSCSNSTGCCHTPITCDDN). One copy of the A-6 repeat lies at 277 to 300 (NACTVDSCSNSTGCCHTPINVDDN). One copy of the B-3 repeat lies at 301 to 324 (NACTEDKCTQSGGVTHTPIACDDK). Residues 325 to 348 (NACTVDSCSNSTGCVHTPLACDDK) form an A-7 repeat. The stretch at 349–372 (NPCTVDSCSNSTGCCHTPINVDDN) is one A-8 repeat. The B-4 repeat unit spans residues 373-396 (NACTEDKCTQSGGVTHTPINCDDN). An A-9 repeat occupies 397 to 420 (NKCTVDSCSNSTGCCHTPMSCDDN). An A-10 repeat occupies 421–444 (NPCTVDSCSNSTGCVHTPINVDDN). The B-5 repeat unit spans residues 445–468 (NACTEDKCTQNGGVTHTPIACDDK). An A-11 repeat occupies 469 to 492 (NACTVDSCSNSTGCCHTPLKCDDN). The stretch at 493–516 (NACTVDSCSNSTGCVHTPINVDDN) is one A-12 repeat. Residues 517–540 (NACTEDKCTQSGGVTHTPISCDDK) form a B-6 repeat. One copy of the A-13 repeat lies at 541–564 (NPCTIDSCSNSTGCVHTPMSCDDR). The X-4 repeat unit spans residues 565–588 (NPCTSDFCSWEKGCQHVALSCNDF). The stretch at 589 to 612 (NACTMDSCSNSTGCTHTPIACDDK) is one A-14 repeat. Residues 613 to 636 (NACTVDSCSNSTGCVHTPLTCDDN) form an A-15 repeat. The stretch at 637–660 (NPCTVDSCSNSTGCCHTPINVDDH) is one A-16 repeat. One copy of the B-7 repeat lies at 661–684 (NACTEDKCTQSGGVTHTPIACDDK). The A-17 repeat unit spans residues 685 to 708 (NACTVDSCSNSTGCCHTPLSCDDN). An A-18 repeat occupies 709–732 (NACTVDSCSNSTGCVHTPINVDDN). The B-8 repeat unit spans residues 733-756 (NACTEDKCTQNGGVTHTPIACDDK). One copy of the A-19 repeat lies at 757–780 (NACTVDSCSNSTGCCHTPLKCDDN). One copy of the A-20 repeat lies at 781–804 (NPCTVDSCSNSTGCVHTPMNVDDN). The stretch at 805–828 (NACTEDKCTQNGGVTHTPIRCDDL) is one B-9 repeat. The A-21 repeat unit spans residues 829–852 (NSCTADSCSNSTGCVHTPINCDDN). The A-22 repeat unit spans residues 853 to 876 (NKCTADSCSNSTGCCHTPISCDDN). The A-23 repeat unit spans residues 877 to 900 (NPCTVDSCSNSTGCCHTPINVDDN). One copy of the B-10 repeat lies at 901–924 (NPCTEDKCTQSGGVTHTPIGCNDN). The stretch at 925–948 (NACTVDSCSNSTGCTHTPMKCDDN) is one A-24 repeat. Residues 949 to 971 (NPCTIDSCSNSTGCVHTPMNCDD) form an A-25 repeat. Residues 972–995 (GNFCTLDSCCSTGCTHTPIIIDDN) form an A-26 repeat. The stretch at 996–1019 (NPCTVDSCCNSTGVVHTPVDCNDN) is one A-27 repeat.

The protein localises to the secreted. It is found in the extracellular space. It localises to the extracellular matrix. Functionally, component of the stalk tube, the matrix that encases stalk cells. This chain is Prestalk protein (ecmB), found in Dictyostelium discoideum (Social amoeba).